The sequence spans 144 residues: Putative pre-16S rRNA nuclease (144 aa).

This sequence belongs to the YqgF nuclease family.

It is found in the cytoplasm. Could be a nuclease involved in processing of the 5'-end of pre-16S rRNA. The protein is Putative pre-16S rRNA nuclease of Ralstonia nicotianae (strain ATCC BAA-1114 / GMI1000) (Ralstonia solanacearum).